A 109-amino-acid chain; its full sequence is Class I hydrophobin 2 (109 aa).

Residues 1 to 18 form the signal peptide; the sequence is MQFKLAFVSIALATLAVA. 4 cysteine pairs are disulfide-bonded: C30/C90, C37/C84, C38/C71, and C91/C104.

This sequence belongs to the fungal hydrophobin family. Self-assembles to form functional amyloid fibrils called rodlets. Self-assembly into fibrillar rodlets occurs spontaneously at hydrophobic:hydrophilic interfaces and the rodlets further associate laterally to form amphipathic monolayers.

Its subcellular location is the secreted. It is found in the cell wall. Functionally, aerial growth, conidiation, and dispersal of filamentous fungi in the environment rely upon a capability of their secreting small amphipathic proteins called hydrophobins (HPBs) with low sequence identity. Class I can self-assemble into an outermost layer of rodlet bundles on aerial cell surfaces, conferring cellular hydrophobicity that supports fungal growth, development and dispersal; whereas Class II form highly ordered films at water-air interfaces through intermolecular interactions but contribute nothing to the rodlet structure. Hyd2 is a class I hydrophobin that may allow the dikaryotic mycelia to attach to the hydrophobic surface of the substrate. Higher expression in dikaryotic mycelia than in monokaryotic mycelia indicates that dikaryons require more hyd2 hydrophobin than the monokaryons, presumably for a higher rate of hyphal growth. This chain is Class I hydrophobin 2, found in Lentinula edodes (Shiitake mushroom).